Here is a 268-residue protein sequence, read N- to C-terminus: Uronate dehydrogenase (268 aa).

NAD(+) contacts are provided by residues 17 to 18, 37 to 39, 55 to 56, and 75 to 79; these read GL, DIS, DL, and FGGVS. Substrate-binding positions include Ser79 and 115-117; that span reads SNH. Tyr140 acts as the Proton acceptor in catalysis. Lys144 contributes to the NAD(+) binding site. Position 169 (Ser169) interacts with substrate. Ser170 lines the NAD(+) pocket. Arg178 provides a ligand contact to substrate.

This sequence belongs to the NAD(P)-dependent epimerase/dehydratase family. In terms of assembly, homohexamer.

The catalysed reaction is beta-D-galacturonate + NAD(+) = D-galactaro-1,5-lactone + NADH + H(+). It catalyses the reaction beta-D-glucuronate + NAD(+) = D-glucaro-1,5-lactone + NADH + H(+). It participates in carbohydrate acid metabolism; D-galacturonate degradation via prokaryotic oxidative pathway. Catalyzes the oxidation of beta-D-galacturonate and beta-D-glucuronate to galactarate and D-glucarate, respectively. The sequence is that of Uronate dehydrogenase (udh) from Pseudomonas putida (strain ATCC 47054 / DSM 6125 / CFBP 8728 / NCIMB 11950 / KT2440).